A 211-amino-acid chain; its full sequence is Thymidylate kinase (211 aa).

10 to 17 contacts ATP; that stretch reads GPDGAGKT.

The protein belongs to the thymidylate kinase family.

It carries out the reaction dTMP + ATP = dTDP + ADP. Its function is as follows. Phosphorylation of dTMP to form dTDP in both de novo and salvage pathways of dTTP synthesis. The protein is Thymidylate kinase of Lactococcus lactis subsp. cremoris (strain MG1363).